The sequence spans 237 residues: Pyridoxal 5'-phosphate synthase subunit PdxS (237 aa).

Lys-19 acts as the Schiff-base intermediate with D-ribose 5-phosphate in catalysis. Residue Gly-91 coordinates D-ribose 5-phosphate. Arg-103 is a D-glyceraldehyde 3-phosphate binding site. D-ribose 5-phosphate-binding positions include Gly-157 and 178–179 (GS).

It belongs to the PdxS/SNZ family. In terms of assembly, in the presence of PdxT, forms a dodecamer of heterodimers.

It carries out the reaction aldehydo-D-ribose 5-phosphate + D-glyceraldehyde 3-phosphate + L-glutamine = pyridoxal 5'-phosphate + L-glutamate + phosphate + 3 H2O + H(+). Its pathway is cofactor biosynthesis; pyridoxal 5'-phosphate biosynthesis. In terms of biological role, catalyzes the formation of pyridoxal 5'-phosphate from ribose 5-phosphate (RBP), glyceraldehyde 3-phosphate (G3P) and ammonia. The ammonia is provided by the PdxT subunit. Can also use ribulose 5-phosphate and dihydroxyacetone phosphate as substrates, resulting from enzyme-catalyzed isomerization of RBP and G3P, respectively. The protein is Pyridoxal 5'-phosphate synthase subunit PdxS of Methanococcus vannielii.